The chain runs to 1028 residues: Antigenic heat-stable 120 kDa protein (1028 aa).

Polar residues-rich tracts occupy residues 359 to 384 (GQSK…QYKQ) and 391 to 400 (PTNQPLQPET). Residues 359–405 (GQSKEQPLITPQQTTSSSVEPPQYKQQVPPITPTNQPLQPETSQMQQ) form a disordered region.

Its subcellular location is the cytoplasm. The sequence is that of Antigenic heat-stable 120 kDa protein (sca4) from Rickettsia africae.